The chain runs to 240 residues: Ubiquinone biosynthesis O-methyltransferase (240 aa).

4 residues coordinate S-adenosyl-L-methionine: arginine 44, glycine 64, aspartate 85, and methionine 129.

It belongs to the methyltransferase superfamily. UbiG/COQ3 family.

It catalyses the reaction a 3-demethylubiquinol + S-adenosyl-L-methionine = a ubiquinol + S-adenosyl-L-homocysteine + H(+). The catalysed reaction is a 3-(all-trans-polyprenyl)benzene-1,2-diol + S-adenosyl-L-methionine = a 2-methoxy-6-(all-trans-polyprenyl)phenol + S-adenosyl-L-homocysteine + H(+). It functions in the pathway cofactor biosynthesis; ubiquinone biosynthesis. Its function is as follows. O-methyltransferase that catalyzes the 2 O-methylation steps in the ubiquinone biosynthetic pathway. The sequence is that of Ubiquinone biosynthesis O-methyltransferase from Escherichia coli O7:K1 (strain IAI39 / ExPEC).